Here is a 209-residue protein sequence, read N- to C-terminus: Orotate phosphoribosyltransferase (209 aa).

5-phospho-alpha-D-ribose 1-diphosphate contacts are provided by residues arginine 96, lysine 100, histidine 102, and 122–130 (EDLISTGGS). An orotate-binding site is contributed by serine 126.

This sequence belongs to the purine/pyrimidine phosphoribosyltransferase family. PyrE subfamily. Homodimer. The cofactor is Mg(2+).

It carries out the reaction orotidine 5'-phosphate + diphosphate = orotate + 5-phospho-alpha-D-ribose 1-diphosphate. The protein operates within pyrimidine metabolism; UMP biosynthesis via de novo pathway; UMP from orotate: step 1/2. Catalyzes the transfer of a ribosyl phosphate group from 5-phosphoribose 1-diphosphate to orotate, leading to the formation of orotidine monophosphate (OMP). The protein is Orotate phosphoribosyltransferase of Streptococcus gordonii (strain Challis / ATCC 35105 / BCRC 15272 / CH1 / DL1 / V288).